We begin with the raw amino-acid sequence, 450 residues long: Exodeoxyribonuclease 7 large subunit (450 aa).

Belongs to the XseA family. As to quaternary structure, heterooligomer composed of large and small subunits.

The protein localises to the cytoplasm. It carries out the reaction Exonucleolytic cleavage in either 5'- to 3'- or 3'- to 5'-direction to yield nucleoside 5'-phosphates.. Functionally, bidirectionally degrades single-stranded DNA into large acid-insoluble oligonucleotides, which are then degraded further into small acid-soluble oligonucleotides. The protein is Exodeoxyribonuclease 7 large subunit of Rickettsia felis (strain ATCC VR-1525 / URRWXCal2) (Rickettsia azadi).